Here is a 315-residue protein sequence, read N- to C-terminus: uncharacterized protein (315 aa).

3 helical membrane-spanning segments follow: residues 19 to 39 (IGAG…GNVF), 56 to 76 (TVLV…LHSF), and 81 to 101 (PLKK…ISLI). Residues 154 to 171 (EDSASSGRTSSSVNQPIQ) are compositionally biased toward polar residues. The disordered stretch occupies residues 154–214 (EDSASSGRTS…EREARAQEHD (61 aa)). Basic and acidic residues predominate over residues 203–214 (GGEREARAQEHD).

This sequence belongs to the ATPase C chain family.

It is found in the mitochondrion membrane. This is an uncharacterized protein from Arabidopsis thaliana (Mouse-ear cress).